Here is a 510-residue protein sequence, read N- to C-terminus: MNGTDLPRLQPKIRRVNLDTGRENVVVISRHSAALRPEIFRGFSRVELRRNAKIMLATLIITDDDSLVGPDDLGLSEPAFRRFAEPVGSAVTIAPAASPASLDAVRAKIMGQTFSAVDISAIIDDLTHYRYSDMEIAAFLISSASFMTNGELIALVDSMARAGTQLKWRNPIIVDKHCIGGIPGNRTSMIVVPIVAAHGLTIPKTSSRAITSPAGTADTMEMLARVDVGVEEMKDIVAACRGCLVWGGHVNLSPADDILISVERPLGLDTREQMVASILSKKLAAGSTHLLIDLPVGPTAKLVNEMEAMRLRKLFEFVGDHYGISVEVVVTDGRQPIGNGIGPVLEAQDVMAVLANDPEAPADLREKSLRLAAHLLEYDPKLRGGSGYARARELLDSGAALKQMQKIIDAQGPPTCCTDLGNLTFDVTASRDGFVSGINCLQLNRLARIAGAPIDKGAGIRLFKKIGDRVQQGEPLYRIHAFERSGRDLAAAGTTAYTIDSEESNLEATP.

The protein belongs to the thymidine/pyrimidine-nucleoside phosphorylase family. Type 2 subfamily.

It carries out the reaction thymidine + phosphate = 2-deoxy-alpha-D-ribose 1-phosphate + thymine. The sequence is that of Putative thymidine phosphorylase from Nitrobacter hamburgensis (strain DSM 10229 / NCIMB 13809 / X14).